The chain runs to 209 residues: Ribosomal RNA large subunit methyltransferase E (209 aa).

Residues G63, W65, D83, D99, and D124 each contribute to the S-adenosyl-L-methionine site. The Proton acceptor role is filled by K164.

This sequence belongs to the class I-like SAM-binding methyltransferase superfamily. RNA methyltransferase RlmE family.

The protein localises to the cytoplasm. It catalyses the reaction uridine(2552) in 23S rRNA + S-adenosyl-L-methionine = 2'-O-methyluridine(2552) in 23S rRNA + S-adenosyl-L-homocysteine + H(+). Functionally, specifically methylates the uridine in position 2552 of 23S rRNA at the 2'-O position of the ribose in the fully assembled 50S ribosomal subunit. In Shewanella sp. (strain ANA-3), this protein is Ribosomal RNA large subunit methyltransferase E.